The following is a 117-amino-acid chain: uncharacterized protein (117 aa).

It is found in the cytoplasm. It localises to the nucleus. This is an uncharacterized protein from Schizosaccharomyces pombe (strain 972 / ATCC 24843) (Fission yeast).